The chain runs to 855 residues: MVKTVANGKKKPQKVVKKQQKTQKKHNQQKLQKRNTPTLKQKLKKESKIVKINELAWKPVEIPDNFGDFGGFYGLEEIDGVDVEMVDGKPQFVVKGEEGEKSVSNENTTTNELEDGDDIEVDEGEEIAQQEQENSDNDELIEEDAEEVEEQQQHGEKELEEEEFTGFGDDIAKEEKDSDGAKKKLNSSEDIDELKYNAFANLDLPLPNDDEIDLPEWGEDKIETCLSPYILNGLSNMKFTTPTPIQKRTIPLALEGKDVIGKATTGSGKTLAYGIPILEKYIQSLDTVKRKVREKVVNHPTGIIFAPTRELAHQVVDHLNKIAQYSPLSTKGIVSVTGGLSIQKQERLLSFGPGIIVATPGRMLELCQNDQELVKRLSMTDIIVLDEADRLLQDGHFEEFEKILELFNKNRPKNDKSIEWKWQTLVFSATFSRDLFGKLDKQQKQKSVKGNGKALNKADSGNSLVQNDEIIELLREKLRFKDKAPSLVDANPKEIVSGQITEALVECGPLERDLYLYYFLLMYKGSTLVFANSIDSVKRLVPLLNNLNIPAFAIHSSMIQKQRLRSLERFKDASEKNQTAVLVASDVAARGLDIPNIDHVAHYHLPRSADVYIHRSGRTARAGKEGVSVMFCSPQEASGPLRKLRKLVASNAANNKNQKINVHSDVKLLPVEMDLVSQLRPRVELAGRLADSNISSTATRKENSWVKQAAEELGVEDLHDLDEFEDDIIKKQRKRQESKRLDKNEQKRLRFELRELLANPIRKNNRRSYLTSGLQNLAHLMVQGTHHEDVLGHEKVKALKDLQKNGSKIKPVKGDDKMKRIAKVNQRKQAKKDAKKDAKQKRQELRHGHSNKSEE.

Disordered regions lie at residues 1-43 (MVKT…KQKL) and 95-167 (KGEE…FTGF). Residues 8-33 (GKKKPQKVVKKQQKTQKKHNQQKLQK) are compositionally biased toward basic residues. The span at 112–150 (ELEDGDDIEVDEGEEIAQQEQENSDNDELIEEDAEEVEE) shows a compositional bias: acidic residues. Positions 219–247 (EDKIETCLSPYILNGLSNMKFTTPTPIQK) match the Q motif motif. The Helicase ATP-binding domain occupies 250–449 (IPLALEGKDV…DKQQKQKSVK (200 aa)). Position 263–270 (263–270 (ATTGSGKT)) interacts with ATP. The DEAD box signature appears at 386–389 (DEAD). One can recognise a Helicase C-terminal domain in the interval 515-668 (YLYYFLLMYK…KINVHSDVKL (154 aa)). Residues 801–855 (DLQKNGSKIKPVKGDDKMKRIAKVNQRKQAKKDAKKDAKQKRQELRHGHSNKSEE) are disordered. Residues 820 to 830 (RIAKVNQRKQA) show a composition bias toward basic residues. Residues 831–855 (KKDAKKDAKQKRQELRHGHSNKSEE) are compositionally biased toward basic and acidic residues.

It belongs to the DEAD box helicase family. DDX24/MAK5 subfamily.

It is found in the nucleus. It localises to the nucleolus. The enzyme catalyses ATP + H2O = ADP + phosphate + H(+). Functionally, ATP-binding RNA helicase involved in the biogenesis of 60S ribosomal subunits and is required for the normal formation of 25S and 5.8S rRNAs. This is ATP-dependent RNA helicase MAK5 (MAK5) from Lodderomyces elongisporus (strain ATCC 11503 / CBS 2605 / JCM 1781 / NBRC 1676 / NRRL YB-4239) (Yeast).